The primary structure comprises 215 residues: Uracil-DNA glycosylase (215 aa).

The Proton acceptor role is filled by Asp59.

It belongs to the uracil-DNA glycosylase (UDG) superfamily. UNG family.

It is found in the cytoplasm. The catalysed reaction is Hydrolyzes single-stranded DNA or mismatched double-stranded DNA and polynucleotides, releasing free uracil.. In terms of biological role, excises uracil residues from the DNA which can arise as a result of misincorporation of dUMP residues by DNA polymerase or due to deamination of cytosine. The sequence is that of Uracil-DNA glycosylase from Aliarcobacter butzleri (strain RM4018) (Arcobacter butzleri).